The following is a 126-amino-acid chain: Large ribosomal subunit protein uL22 (126 aa).

This sequence belongs to the universal ribosomal protein uL22 family. As to quaternary structure, part of the 50S ribosomal subunit.

Functionally, this protein binds specifically to 23S rRNA; its binding is stimulated by other ribosomal proteins, e.g. L4, L17, and L20. It is important during the early stages of 50S assembly. It makes multiple contacts with different domains of the 23S rRNA in the assembled 50S subunit and ribosome. Its function is as follows. The globular domain of the protein is located near the polypeptide exit tunnel on the outside of the subunit, while an extended beta-hairpin is found that lines the wall of the exit tunnel in the center of the 70S ribosome. The sequence is that of Large ribosomal subunit protein uL22 from Jannaschia sp. (strain CCS1).